A 288-amino-acid polypeptide reads, in one-letter code: ATP synthase gamma chain (288 aa).

This sequence belongs to the ATPase gamma chain family. As to quaternary structure, F-type ATPases have 2 components, CF(1) - the catalytic core - and CF(0) - the membrane proton channel. CF(1) has five subunits: alpha(3), beta(3), gamma(1), delta(1), epsilon(1). CF(0) has three main subunits: a, b and c.

It localises to the cell inner membrane. In terms of biological role, produces ATP from ADP in the presence of a proton gradient across the membrane. The gamma chain is believed to be important in regulating ATPase activity and the flow of protons through the CF(0) complex. The chain is ATP synthase gamma chain from Rickettsia typhi (strain ATCC VR-144 / Wilmington).